A 490-amino-acid chain; its full sequence is Apocarotenoid-15,15'-oxygenase (490 aa).

His-183 contacts Fe cation. Ser-206 is a binding site for substrate. Fe cation is bound at residue His-238. Phe-303 serves as a coordination point for substrate. Positions 304 and 484 each coordinate Fe cation.

Belongs to the carotenoid oxygenase family. Fe(2+) serves as cofactor.

It catalyses the reaction all-trans-8'-apo-beta-carotenal + O2 = (2E,4E,6E)-2,6-dimethylocta-2,4,6-trienedial + all-trans-retinal. Its function is as follows. Cleaves a number of carotenals and carotenols in the all-trans configuration at the 15-15' double bond producing retinal or retinol, respectively. Also shows activity toward lycopenals and the corresponding alcohols. Does not cleave beta-carotene or lycopene. The sequence is that of Apocarotenoid-15,15'-oxygenase from Synechocystis sp. (strain ATCC 27184 / PCC 6803 / Kazusa).